A 482-amino-acid chain; its full sequence is Ribulose bisphosphate carboxylase large chain (482 aa).

A propeptide spanning residues 1-2 (MS) is cleaved from the precursor. Position 3 is an N-acetylproline (proline 3). N6,N6,N6-trimethyllysine is present on lysine 14. Residues asparagine 123 and threonine 173 each coordinate substrate. Lysine 175 acts as the Proton acceptor in catalysis. Lysine 177 is a binding site for substrate. Residues lysine 201, aspartate 203, and glutamate 204 each coordinate Mg(2+). The residue at position 201 (lysine 201) is an N6-carboxylysine. Histidine 294 serves as the catalytic Proton acceptor. Residues arginine 295, histidine 327, and serine 379 each coordinate substrate.

It belongs to the RuBisCO large chain family. Type I subfamily. Heterohexadecamer of 8 large chains and 8 small chains; disulfide-linked. The disulfide link is formed within the large subunit homodimers. Requires Mg(2+) as cofactor. Post-translationally, the disulfide bond which can form in the large chain dimeric partners within the hexadecamer appears to be associated with oxidative stress and protein turnover.

The protein resides in the plastid. It localises to the chloroplast. It catalyses the reaction 2 (2R)-3-phosphoglycerate + 2 H(+) = D-ribulose 1,5-bisphosphate + CO2 + H2O. It carries out the reaction D-ribulose 1,5-bisphosphate + O2 = 2-phosphoglycolate + (2R)-3-phosphoglycerate + 2 H(+). Functionally, ruBisCO catalyzes two reactions: the carboxylation of D-ribulose 1,5-bisphosphate, the primary event in carbon dioxide fixation, as well as the oxidative fragmentation of the pentose substrate in the photorespiration process. Both reactions occur simultaneously and in competition at the same active site. The sequence is that of Ribulose bisphosphate carboxylase large chain from Stegnosperma halimifolium.